The sequence spans 372 residues: NAD(P)H-quinone oxidoreductase subunit 1 (372 aa).

8 helical membrane passes run 27-47 (AVWM…GVLI), 97-117 (ALFT…YLIV), 128-148 (LGIG…GLLM), 166-186 (AAQS…IAMM), 204-224 (ILGW…IAAL), 254-274 (FALF…MVAI), 308-328 (AVGI…AILL), and 351-371 (VGLV…IAFG).

The protein belongs to the complex I subunit 1 family. In terms of assembly, NDH-1 is composed of at least 11 different subunits.

It localises to the cellular thylakoid membrane. The enzyme catalyses a plastoquinone + NADH + (n+1) H(+)(in) = a plastoquinol + NAD(+) + n H(+)(out). It carries out the reaction a plastoquinone + NADPH + (n+1) H(+)(in) = a plastoquinol + NADP(+) + n H(+)(out). NDH-1 shuttles electrons from an unknown electron donor, via FMN and iron-sulfur (Fe-S) centers, to quinones in the respiratory and/or the photosynthetic chain. The immediate electron acceptor for the enzyme in this species is believed to be plastoquinone. Couples the redox reaction to proton translocation, and thus conserves the redox energy in a proton gradient. The polypeptide is NAD(P)H-quinone oxidoreductase subunit 1 (Cyanothece sp. (strain PCC 7425 / ATCC 29141)).